A 169-amino-acid polypeptide reads, in one-letter code: Inorganic pyrophosphatase (169 aa).

Residues lysine 20, arginine 34, and tyrosine 46 each coordinate substrate. Mg(2+) contacts are provided by aspartate 56, aspartate 61, and aspartate 93. Tyrosine 130 serves as a coordination point for substrate.

This sequence belongs to the PPase family. In terms of assembly, homohexamer. Requires Mg(2+) as cofactor.

It localises to the cytoplasm. It catalyses the reaction diphosphate + H2O = 2 phosphate + H(+). Its function is as follows. Catalyzes the hydrolysis of inorganic pyrophosphate (PPi) forming two phosphate ions. The chain is Inorganic pyrophosphatase from Methanosarcina mazei (strain ATCC BAA-159 / DSM 3647 / Goe1 / Go1 / JCM 11833 / OCM 88) (Methanosarcina frisia).